Consider the following 496-residue polypeptide: SRCTHLENRDFVTGTQGTTRVTLVLELGGCVTITAEGKPSVDVWLDAIYQESPAKTREYCLHAKLSETKVAARCPTMGPAALAEERQIGTVCKRDQSDRGWGNHCGLFGKGSIVACVKAACEAKKKATGYVYDANKIVYTVKVEPHTGDYVAANETHKGRKTATFTVSSEKTILTLGEYGDVSLLCRVASGVDLAQTIILELDKTAEHLPTAWQVHRDWFNDLALPWKHEGNPHWNNVERLVEFGAPHAVKMDVYNLGDQTGVLLKALAGVPVAHIEGNKYHLKSGHVTCEVGLEKLKMKGLTYTMCDKSKFAWKRTPTDSGHDTVVMEVTFSGSKPCRIPVRAVAHGSPDVNVAMLITPNPTIENDGGGFIEMQLPPGDNIIYVGELSHQWFQTGSSIGRVFQTTRKGIERLTVIGEHAWDFGSAGGFFSSIGKAVHTVLGGAFNSIFGGVGFLPKLLMGVALAWLGLNTRNPTMSMSFLLTGGLVLAMTLGVGA.

At Ser1–Ser447 the chain is on the extracellular side. 6 cysteine pairs are disulfide-bonded: Cys3–Cys30, Cys60–Cys116, Cys60–Cys121, Cys74–Cys105, Cys92–Cys116, and Cys92–Cys121. A fusion peptide region spans residues Asp98–Gly111. The N-linked (GlcNAc...) asparagine; by host glycan is linked to Asn154. Intrachain disulfides connect Cys186/Cys290 and Cys307/Cys338. Residues Ile448–Gly468 form a helical membrane-spanning segment. At Leu469 to Ser479 the chain is on the cytoplasmic side. Residues Phe480–Ala496 form a helical membrane-spanning segment.

As to quaternary structure, homodimer; in the endoplasmic reticulum and Golgi. N-glycosylated.

The protein localises to the virion membrane. It localises to the host endoplasmic reticulum membrane. Binds to host cell surface receptor and mediates fusion between viral and cellular membranes. Envelope protein is synthesized in the endoplasmic reticulum in the form of heterodimer with protein prM. They play a role in virion budding in the ER, and the newly formed immature particle is covered with 60 spikes composed of heterodimer between precursor prM and envelope protein E. The virion is transported to the Golgi apparatus where the low pH causes dissociation of PrM-E heterodimers and formation of E homodimers. prM-E cleavage is ineficient, and many virions are only partially matured. These uncleaved prM would play a role in immune evasion. This is Genome polyprotein from Bos taurus (Bovine).